Reading from the N-terminus, the 396-residue chain is Ornithine aminotransferase (396 aa).

Lys-255 is modified (N6-(pyridoxal phosphate)lysine).

This sequence belongs to the class-III pyridoxal-phosphate-dependent aminotransferase family. OAT subfamily. The cofactor is pyridoxal 5'-phosphate.

The protein resides in the cytoplasm. It catalyses the reaction a 2-oxocarboxylate + L-ornithine = L-glutamate 5-semialdehyde + an L-alpha-amino acid. It participates in amino-acid biosynthesis; L-proline biosynthesis; L-glutamate 5-semialdehyde from L-ornithine: step 1/1. In terms of biological role, catalyzes the interconversion of ornithine to glutamate semialdehyde. This Bacillus anthracis (strain A0248) protein is Ornithine aminotransferase.